The following is a 402-amino-acid chain: Phosphoglycerate kinase (402 aa).

Residues 21-23 (DFN), arginine 36, 59-62 (HLGR), arginine 118, and arginine 151 each bind substrate. Residues lysine 201, glycine 293, glutamate 324, and 353–356 (GGDS) contribute to the ATP site.

This sequence belongs to the phosphoglycerate kinase family. In terms of assembly, monomer.

The protein resides in the cytoplasm. It catalyses the reaction (2R)-3-phosphoglycerate + ATP = (2R)-3-phospho-glyceroyl phosphate + ADP. It functions in the pathway carbohydrate degradation; glycolysis; pyruvate from D-glyceraldehyde 3-phosphate: step 2/5. The polypeptide is Phosphoglycerate kinase (Thermosipho africanus (strain TCF52B)).